The sequence spans 541 residues: Tyrosine-protein kinase Yes (541 aa).

The N-myristoyl glycine moiety is linked to residue Gly-2. Cys-3 is lipidated: S-palmitoyl cysteine; in membrane form. Tyr-32 is modified (phosphotyrosine). Positions Gly-89–Ser-150 constitute an SH3 domain. Residues Trp-156–Cys-253 enclose the SH2 domain. The region spanning Leu-275–Phe-528 is the Protein kinase domain. ATP-binding positions include Leu-281 to Val-289 and Lys-303. A phosphotyrosine mark is found at Tyr-334 and Tyr-343. Asp-394 functions as the Proton acceptor in the catalytic mechanism. Position 424 is a phosphotyrosine; by autocatalysis (Tyr-424). Tyr-535 carries the phosphotyrosine modification.

It belongs to the protein kinase superfamily. Tyr protein kinase family. SRC subfamily. In terms of assembly, interacts with YAP1. Interacts with FASLG. Interacts with CTNND1; this interaction allows YES1-mediated activation of FYN and FER and subsequent phosphorylation of CTNND1. Interacts with CSF1R. Interacts with IL6ST/gp130. Interacts with SCRIB, when YES1 is in a closed conformation; the interaction facilitates YES1 autophosphorylation. Post-translationally, phosphorylated. Phosphorylation by CSK on the C-terminal tail maintains the enzyme in an inactive state. Autophosphorylation at Tyr-424 maintains enzyme activity by blocking CSK-mediated inhibition. In terms of processing, palmitoylation at Cys-3 promotes membrane localization.

The protein resides in the cell membrane. Its subcellular location is the cytoplasm. It is found in the cytoskeleton. The protein localises to the microtubule organizing center. It localises to the centrosome. The protein resides in the cytosol. Its subcellular location is the cell junction. The catalysed reaction is L-tyrosyl-[protein] + ATP = O-phospho-L-tyrosyl-[protein] + ADP + H(+). In terms of biological role, non-receptor protein tyrosine kinase that is involved in the regulation of cell growth and survival, apoptosis, cell-cell adhesion, cytoskeleton remodeling, and differentiation. Stimulation by receptor tyrosine kinases (RTKs) including EGFR, PDGFR, CSF1R and FGFR leads to recruitment of YES1 to the phosphorylated receptor, and activation and phosphorylation of downstream substrates. Upon EGFR activation, promotes the phosphorylation of PARD3 to favor epithelial tight junction assembly. Participates in the phosphorylation of specific junctional components such as CTNND1 by stimulating the FYN and FER tyrosine kinases at cell-cell contacts. Upon T-cell stimulation by CXCL12, phosphorylates collapsin response mediator protein 2/DPYSL2 and induces T-cell migration. Participates in CD95L/FASLG signaling pathway and mediates AKT-mediated cell migration. Plays a role in cell cycle progression by phosphorylating the cyclin dependent kinase 4/CDK4 thus regulating the G1 phase. Also involved in G2/M progression and cytokinesis. Catalyzes phosphorylation of organic cation transporter OCT2 which induces its transport activity. In Mus musculus (Mouse), this protein is Tyrosine-protein kinase Yes (Yes1).